We begin with the raw amino-acid sequence, 72 residues long: ATP synthase subunit c (72 aa).

2 helical membrane passes run 5 to 25 and 51 to 71; these read LLAAGIAVLAGIGAGIGIGIA and AGLSEATAIYGLVVSIILLFV.

Belongs to the ATPase C chain family. In terms of assembly, F-type ATPases have 2 components, F(1) - the catalytic core - and F(0) - the membrane proton channel. F(1) has five subunits: alpha(3), beta(3), gamma(1), delta(1), epsilon(1). F(0) has three main subunits: a(1), b(2) and c(10-14). The alpha and beta chains form an alternating ring which encloses part of the gamma chain. F(1) is attached to F(0) by a central stalk formed by the gamma and epsilon chains, while a peripheral stalk is formed by the delta and b chains.

It is found in the cell membrane. Functionally, f(1)F(0) ATP synthase produces ATP from ADP in the presence of a proton or sodium gradient. F-type ATPases consist of two structural domains, F(1) containing the extramembraneous catalytic core and F(0) containing the membrane proton channel, linked together by a central stalk and a peripheral stalk. During catalysis, ATP synthesis in the catalytic domain of F(1) is coupled via a rotary mechanism of the central stalk subunits to proton translocation. Key component of the F(0) channel; it plays a direct role in translocation across the membrane. A homomeric c-ring of between 10-14 subunits forms the central stalk rotor element with the F(1) delta and epsilon subunits. This is ATP synthase subunit c from Clostridium perfringens (strain ATCC 13124 / DSM 756 / JCM 1290 / NCIMB 6125 / NCTC 8237 / Type A).